A 100-amino-acid polypeptide reads, in one-letter code: Large ribosomal subunit protein bL21 (100 aa).

The protein belongs to the bacterial ribosomal protein bL21 family. As to quaternary structure, part of the 50S ribosomal subunit. Contacts protein L20.

This protein binds to 23S rRNA in the presence of protein L20. The sequence is that of Large ribosomal subunit protein bL21 from Mycoplasma pneumoniae (strain ATCC 29342 / M129 / Subtype 1) (Mycoplasmoides pneumoniae).